Reading from the N-terminus, the 241-residue chain is Uridylate kinase (241 aa).

14 to 17 is a binding site for ATP; it reads KASG. The tract at residues 22 to 27 is involved in allosteric activation by GTP; that stretch reads GDQGFG. UMP is bound at residue Gly56. Positions 57 and 61 each coordinate ATP. Residues Asp76 and 137 to 144 contribute to the UMP site; that span reads TGNPFFTT. Residues Thr164, Gln165, Tyr170, and Asp173 each contribute to the ATP site.

The protein belongs to the UMP kinase family. In terms of assembly, homohexamer.

It is found in the cytoplasm. It catalyses the reaction UMP + ATP = UDP + ADP. The protein operates within pyrimidine metabolism; CTP biosynthesis via de novo pathway; UDP from UMP (UMPK route): step 1/1. Allosterically activated by GTP. Inhibited by UTP. Its function is as follows. Catalyzes the reversible phosphorylation of UMP to UDP. This chain is Uridylate kinase, found in Agrobacterium fabrum (strain C58 / ATCC 33970) (Agrobacterium tumefaciens (strain C58)).